Reading from the N-terminus, the 174-residue chain is NADH-quinone oxidoreductase subunit B 1 (174 aa).

Residues Cys-53, Cys-54, Cys-118, and Cys-148 each coordinate [4Fe-4S] cluster.

This sequence belongs to the complex I 20 kDa subunit family. As to quaternary structure, NDH-1 is composed of 14 different subunits. Subunits NuoB, C, D, E, F, and G constitute the peripheral sector of the complex. The cofactor is [4Fe-4S] cluster.

The protein resides in the cell inner membrane. It catalyses the reaction a quinone + NADH + 5 H(+)(in) = a quinol + NAD(+) + 4 H(+)(out). Its function is as follows. NDH-1 shuttles electrons from NADH, via FMN and iron-sulfur (Fe-S) centers, to quinones in the respiratory chain. The immediate electron acceptor for the enzyme in this species is believed to be ubiquinone. Couples the redox reaction to proton translocation (for every two electrons transferred, four hydrogen ions are translocated across the cytoplasmic membrane), and thus conserves the redox energy in a proton gradient. The sequence is that of NADH-quinone oxidoreductase subunit B 1 from Cereibacter sphaeroides (strain KD131 / KCTC 12085) (Rhodobacter sphaeroides).